Here is a 244-residue protein sequence, read N- to C-terminus: Tyrosine recombinase XerD-like (244 aa).

A Core-binding (CB) domain is found at 1 to 73 (MRDRISAFLE…ACNQFLYFLY (73 aa)). A Tyr recombinase domain is found at 90-244 (AEKKTEKPEI…KTVLTLEKYR (155 aa)). Residues lysine 150 and arginine 211 contribute to the active site. The O-(3'-phospho-DNA)-tyrosine intermediate role is filled by tyrosine 243.

This sequence belongs to the 'phage' integrase family. XerD-like subfamily.

It is found in the cytoplasm. Its function is as follows. Putative tyrosine recombinase. Not involved in the cutting and rejoining of the recombining DNA molecules on dif(SL) site. In Streptococcus pneumoniae serotype 2 (strain D39 / NCTC 7466), this protein is Tyrosine recombinase XerD-like.